We begin with the raw amino-acid sequence, 249 residues long: Ubiquinone/menaquinone biosynthesis C-methyltransferase UbiE (249 aa).

S-adenosyl-L-methionine contacts are provided by residues Thr-72, Asp-93, and 121-122 (NA).

Belongs to the class I-like SAM-binding methyltransferase superfamily. MenG/UbiE family.

It catalyses the reaction a 2-demethylmenaquinol + S-adenosyl-L-methionine = a menaquinol + S-adenosyl-L-homocysteine + H(+). It carries out the reaction a 2-methoxy-6-(all-trans-polyprenyl)benzene-1,4-diol + S-adenosyl-L-methionine = a 5-methoxy-2-methyl-3-(all-trans-polyprenyl)benzene-1,4-diol + S-adenosyl-L-homocysteine + H(+). It participates in quinol/quinone metabolism; menaquinone biosynthesis; menaquinol from 1,4-dihydroxy-2-naphthoate: step 2/2. It functions in the pathway cofactor biosynthesis; ubiquinone biosynthesis. Functionally, methyltransferase required for the conversion of demethylmenaquinol (DMKH2) to menaquinol (MKH2) and the conversion of 2-polyprenyl-6-methoxy-1,4-benzoquinol (DDMQH2) to 2-polyprenyl-3-methyl-6-methoxy-1,4-benzoquinol (DMQH2). The protein is Ubiquinone/menaquinone biosynthesis C-methyltransferase UbiE of Hahella chejuensis (strain KCTC 2396).